A 341-amino-acid chain; its full sequence is Ketol-acid reductoisomerase (NADP(+)) (341 aa).

One can recognise a KARI N-terminal Rossmann domain in the interval 3–184; the sequence is LKVYYDKDCD…GGGRSGIIET (182 aa). NADP(+)-binding positions include 26-29, Ser54, and 84-87; these read FGSQ and DELQ. His109 is a catalytic residue. Gly135 provides a ligand contact to NADP(+). Positions 185–330 constitute a KARI C-terminal knotted domain; the sequence is TFKDETETDL…GRLRAMMPWI (146 aa). Mg(2+)-binding residues include Asp193, Glu197, Glu229, and Glu233. Position 254 (Ser254) interacts with substrate.

Belongs to the ketol-acid reductoisomerase family. It depends on Mg(2+) as a cofactor.

The catalysed reaction is (2R)-2,3-dihydroxy-3-methylbutanoate + NADP(+) = (2S)-2-acetolactate + NADPH + H(+). The enzyme catalyses (2R,3R)-2,3-dihydroxy-3-methylpentanoate + NADP(+) = (S)-2-ethyl-2-hydroxy-3-oxobutanoate + NADPH + H(+). It participates in amino-acid biosynthesis; L-isoleucine biosynthesis; L-isoleucine from 2-oxobutanoate: step 2/4. It functions in the pathway amino-acid biosynthesis; L-valine biosynthesis; L-valine from pyruvate: step 2/4. In terms of biological role, involved in the biosynthesis of branched-chain amino acids (BCAA). Catalyzes an alkyl-migration followed by a ketol-acid reduction of (S)-2-acetolactate (S2AL) to yield (R)-2,3-dihydroxy-isovalerate. In the isomerase reaction, S2AL is rearranged via a Mg-dependent methyl migration to produce 3-hydroxy-3-methyl-2-ketobutyrate (HMKB). In the reductase reaction, this 2-ketoacid undergoes a metal-dependent reduction by NADPH to yield (R)-2,3-dihydroxy-isovalerate. This Helicobacter hepaticus (strain ATCC 51449 / 3B1) protein is Ketol-acid reductoisomerase (NADP(+)).